We begin with the raw amino-acid sequence, 328 residues long: Transcription factor bHLH84 (328 aa).

The interval 145–248 is disordered; the sequence is QCESSKKRTR…ASRGAATDPQ (104 aa). The segment covering 220–229 has biased composition (basic and acidic residues); the sequence is LSKEDGEDSK. Residues 243–292 form the bHLH domain; that stretch reads AATDPQSLYARKRRERINERLRILQHLVPNGTKVDISTMLEEAVQYVKFL.

This sequence belongs to the bHLH protein family. Homodimer.

The protein resides in the nucleus. The polypeptide is Transcription factor bHLH84 (BHLH84) (Arabidopsis thaliana (Mouse-ear cress)).